Reading from the N-terminus, the 438-residue chain is Methylenetetrahydrofolate--tRNA-(uracil-5-)-methyltransferase TrmFO (438 aa).

7–12 (GAGLAG) contacts FAD.

It belongs to the MnmG family. TrmFO subfamily. The cofactor is FAD.

It localises to the cytoplasm. The catalysed reaction is uridine(54) in tRNA + (6R)-5,10-methylene-5,6,7,8-tetrahydrofolate + NADH + H(+) = 5-methyluridine(54) in tRNA + (6S)-5,6,7,8-tetrahydrofolate + NAD(+). The enzyme catalyses uridine(54) in tRNA + (6R)-5,10-methylene-5,6,7,8-tetrahydrofolate + NADPH + H(+) = 5-methyluridine(54) in tRNA + (6S)-5,6,7,8-tetrahydrofolate + NADP(+). Catalyzes the folate-dependent formation of 5-methyl-uridine at position 54 (M-5-U54) in all tRNAs. The polypeptide is Methylenetetrahydrofolate--tRNA-(uracil-5-)-methyltransferase TrmFO (Sulfurihydrogenibium sp. (strain YO3AOP1)).